A 476-amino-acid polypeptide reads, in one-letter code: Glycogen synthase (476 aa).

K15 is a binding site for ADP-alpha-D-glucose.

It belongs to the glycosyltransferase 1 family. Bacterial/plant glycogen synthase subfamily.

The enzyme catalyses [(1-&gt;4)-alpha-D-glucosyl](n) + ADP-alpha-D-glucose = [(1-&gt;4)-alpha-D-glucosyl](n+1) + ADP + H(+). Its pathway is glycan biosynthesis; glycogen biosynthesis. Its function is as follows. Synthesizes alpha-1,4-glucan chains using ADP-glucose. The sequence is that of Glycogen synthase from Ligilactobacillus salivarius (strain UCC118) (Lactobacillus salivarius).